We begin with the raw amino-acid sequence, 412 residues long: 43 kDa receptor-associated protein of the synapse (412 aa).

Glycine 2 is lipidated: N-myristoyl glycine. TPR repeat units follow at residues threonine 6–leucine 39, leucine 83–arginine 116, glycine 123–asparagine 156, cysteine 163–tyrosine 196, alanine 206–histidine 239, alanine 246–isoleucine 279, and valine 286–valine 319. Position 196 is a phosphotyrosine (tyrosine 196). The segment at cysteine 363–arginine 403 adopts an RING-type zinc-finger fold. Serine 405 carries the post-translational modification Phosphoserine.

It belongs to the RAPsyn family. Ubiquitinated by the BCR(KLHL8) complex, leading to its degradation.

The protein resides in the cell membrane. The protein localises to the postsynaptic cell membrane. It localises to the cytoplasm. Its subcellular location is the cytoskeleton. Its function is as follows. Postsynaptic protein required for clustering of nicotinic acetylcholine receptors (nAChRs) at the neuromuscular junction. It may link the receptor to the underlying postsynaptic cytoskeleton, possibly by direct association with actin or spectrin. The polypeptide is 43 kDa receptor-associated protein of the synapse (RAPSN) (Homo sapiens (Human)).